The chain runs to 655 residues: RalA-binding protein 1-A (655 aa).

The disordered stretch occupies residues 1–153; that stretch reads MTECFLPPAS…KKSKDLTAAD (153 aa). A compositionally biased stretch (basic and acidic residues) spans 52–68; that stretch reads DILHEPPDIVSEDEKDH. 69–74 lines the ATP pocket; it reads GKKKGK. Composition is skewed to basic residues over residues 69 to 79 and 102 to 118; these read GKKKGKFKKKE and KIKR…PSFS. A nuclear localization signal region spans residues 102–119; that stretch reads KIKRSKGIHVFKKPSFSK. Positions 119 to 150 are enriched in basic and acidic residues; sequence KKKEKDFKIKEKPKEEKHKEDKHKEKKSKDLT. A run of 2 repeats spans residues 133 to 137 and 138 to 142. Residues 133 to 142 are 2 X 5 AA tandem repeats of E-[D/E]-K-H-K; the sequence is EEKHKEDKHK. Positions 149–214 are mediates association with membranes and could form transmembrane domains; the sequence is LTAADVVKQW…PLVFRECIDF (66 aa). Positions 187–383 constitute a Rho-GAP domain; it reads IPLIEAAERT…PLRWSNMATM (197 aa). The mediates interaction with RALA and RALB stretch occupies residues 398 to 495; it reads RRQEFLLNCL…LTEQEELVAM (98 aa). Residue 413–420 participates in ATP binding; it reads AGVKDLSK. Residues 494–510 form a required to maintain nuclear localization region; the sequence is AMEQYLRRQIATEKEEI. Positions 496-655 are mediates interaction with REPS1 and REPS2; that stretch reads EQYLRRQIAT…GKKLSSETLI (160 aa). Disordered stretches follow at residues 520-548 and 600-655; these read IQSR…EEEL and LQEE…ETLI. Acidic residues predominate over residues 532-548; the sequence is EEYSSESESESEDEEEL. Basic and acidic residues predominate over residues 619–630; that stretch reads NLPETKAPKDQP.

In terms of assembly, interacts with the active, GTP-bound form of ralB and ralA.

Its subcellular location is the cell membrane. The protein localises to the cytoplasm. It is found in the cytosol. It localises to the cytoskeleton. The protein resides in the spindle pole. Its subcellular location is the nucleus. The protein localises to the mitochondrion. It is found in the cell projection. It localises to the lamellipodium. It catalyses the reaction an S-substituted glutathione(in) + ATP + H2O = an S-substituted glutathione(out) + ADP + phosphate + H(+). It carries out the reaction ATP + H2O + xenobioticSide 1 = ADP + phosphate + xenobioticSide 2.. The catalysed reaction is leukotriene C4(in) + ATP + H2O = leukotriene C4(out) + ADP + phosphate + H(+). Functionally, multifunctional protein that functions as a downstream effector of ralA and ralB. As a GTPase-activating protein/GAP can inactivate CDC42 and RAC1 by stimulating their GTPase activity. As part of the Ral signaling pathway, may also regulate ligand-dependent EGF and insulin receptors-mediated endocytosis. During mitosis, may act as a scaffold protein in the phosphorylation of EPSIN/EPN1 by the mitotic kinase cyclin B-CDK1, preventing endocytosis during that phase of the cell cycle. During mitosis, also controls mitochondrial fission as an effector of ralA. Recruited to mitochondrion by ralA, acts as a scaffold to foster the mitotic kinase cyclin B-CDK1-mediated phosphorylation and activation of DNM1L. Acts on the cytoskeleton, to regulate pigment distribution and to regulate gastrulation. Its function is as follows. Could also function as a primary ATP-dependent active transporter for glutathione conjugates of electrophiles. May also actively catalyze the efflux of a wide range of substrates including xenobiotics like doxorubicin (DOX) contributing to cell multidrug resistance. This is RalA-binding protein 1-A (ralbp1-a) from Xenopus laevis (African clawed frog).